Reading from the N-terminus, the 359-residue chain is UDP-N-acetylglucosamine--N-acetylmuramyl-(pentapeptide) pyrophosphoryl-undecaprenol N-acetylglucosamine transferase (359 aa).

Residues 14 to 16, Asn-126, Arg-166, Ser-194, Ile-248, and Gln-293 contribute to the UDP-N-acetyl-alpha-D-glucosamine site; that span reads TGG.

This sequence belongs to the glycosyltransferase 28 family. MurG subfamily.

It localises to the cell inner membrane. The enzyme catalyses di-trans,octa-cis-undecaprenyl diphospho-N-acetyl-alpha-D-muramoyl-L-alanyl-D-glutamyl-meso-2,6-diaminopimeloyl-D-alanyl-D-alanine + UDP-N-acetyl-alpha-D-glucosamine = di-trans,octa-cis-undecaprenyl diphospho-[N-acetyl-alpha-D-glucosaminyl-(1-&gt;4)]-N-acetyl-alpha-D-muramoyl-L-alanyl-D-glutamyl-meso-2,6-diaminopimeloyl-D-alanyl-D-alanine + UDP + H(+). It functions in the pathway cell wall biogenesis; peptidoglycan biosynthesis. In terms of biological role, cell wall formation. Catalyzes the transfer of a GlcNAc subunit on undecaprenyl-pyrophosphoryl-MurNAc-pentapeptide (lipid intermediate I) to form undecaprenyl-pyrophosphoryl-MurNAc-(pentapeptide)GlcNAc (lipid intermediate II). This chain is UDP-N-acetylglucosamine--N-acetylmuramyl-(pentapeptide) pyrophosphoryl-undecaprenol N-acetylglucosamine transferase, found in Verminephrobacter eiseniae (strain EF01-2).